The following is a 1390-amino-acid chain: DNA-directed RNA polymerase subunit beta' (1390 aa).

The Zn(2+) site is built by Cys73, Cys75, Cys88, and Cys91. Residues Asp464, Asp466, and Asp468 each coordinate Mg(2+). Residues Cys810, Cys884, Cys891, and Cys894 each contribute to the Zn(2+) site. Residues 1365–1390 (EKKEQKIYGNGEEPAKEQKWIPQAGT) form a disordered region.

It belongs to the RNA polymerase beta' chain family. In terms of assembly, the RNAP catalytic core consists of 2 alpha, 1 beta, 1 beta' and 1 omega subunit. When a sigma factor is associated with the core the holoenzyme is formed, which can initiate transcription. Requires Mg(2+) as cofactor. The cofactor is Zn(2+).

The enzyme catalyses RNA(n) + a ribonucleoside 5'-triphosphate = RNA(n+1) + diphosphate. Functionally, DNA-dependent RNA polymerase catalyzes the transcription of DNA into RNA using the four ribonucleoside triphosphates as substrates. The chain is DNA-directed RNA polymerase subunit beta' from Methylacidiphilum infernorum (isolate V4) (Methylokorus infernorum (strain V4)).